Reading from the N-terminus, the 397-residue chain is Elongation factor Tu (397 aa).

Positions 10 to 207 (KPHCNIGTIG…AVDEYIPQPE (198 aa)) constitute a tr-type G domain. Positions 19-26 (GHVDHGKT) are G1. 19–26 (GHVDHGKT) lines the GTP pocket. Thr26 lines the Mg(2+) pocket. The tract at residues 61 to 65 (GITIS) is G2. Positions 82–85 (DCPG) are G3. GTP is bound by residues 82-86 (DCPGH) and 137-140 (NKVD). A G4 region spans residues 137–140 (NKVD). The tract at residues 175–177 (SAL) is G5.

The protein belongs to the TRAFAC class translation factor GTPase superfamily. Classic translation factor GTPase family. EF-Tu/EF-1A subfamily. As to quaternary structure, monomer.

It is found in the cytoplasm. The enzyme catalyses GTP + H2O = GDP + phosphate + H(+). Functionally, GTP hydrolase that promotes the GTP-dependent binding of aminoacyl-tRNA to the A-site of ribosomes during protein biosynthesis. This Zymomonas mobilis subsp. mobilis (strain ATCC 31821 / ZM4 / CP4) protein is Elongation factor Tu.